Consider the following 447-residue polypeptide: C4-dicarboxylate transport protein (447 aa).

Helical transmembrane passes span 22–42, 52–72, 90–110, 159–179, 199–219, 232–252, 325–347, and 366–386; these read FQVIVAIVLGAILGHYEPLVG, FINLVKMIIAPVIFLTIVTGI, AYFLFFSTLALIVGMIVAHVV, GNILQVLFIAVLFGIALASVG, LVHILMKAAPIGAFGAIAFTI, WLVGSFYLTAFLFVAVILGVV, LFIAQATNTELTLGHQIALLLVA, and AATLAVVPEVPVAGMALILGV.

It belongs to the dicarboxylate/amino acid:cation symporter (DAACS) (TC 2.A.23) family.

The protein localises to the cell inner membrane. Responsible for the transport of dicarboxylates such as succinate, fumarate, and malate from the periplasm across the membrane. The polypeptide is C4-dicarboxylate transport protein (Stenotrophomonas maltophilia (strain R551-3)).